The sequence spans 225 residues: MEASLSLFRPVATCCRRVALSSSSSSSQKAAAVAGISVRYQSTANRTKRMLNIPPHESFLNVPVEGDRIIFNPPSSEASVYHTPFKFLPRSDPRRRANIYKLFKPPQAPITTPESSSTDAAAADQHGDLPPVLYNPTKSYNVTPEQVEEIRELRAKDPKKYSVTYLSNKYNCTKVFIMMCTQAPREHQEQHKLARARTAENWGPRRAAAKLDARRRKEMLHRGEI.

The disordered stretch occupies residues 106 to 138 (PQAPITTPESSSTDAAAADQHGDLPPVLYNPTK). Over residues 109 to 119 (PITTPESSSTD) the composition is skewed to polar residues.

Belongs to the mitochondrion-specific ribosomal protein mL58 family. As to quaternary structure, component of the mitochondrial large ribosomal subunit (mt-LSU). Mature N.crassa 74S mitochondrial ribosomes consist of a small (37S) and a large (54S) subunit. The 37S small subunit contains a 16S ribosomal RNA (16S mt-rRNA) and 32 different proteins. The 54S large subunit contains a 23S rRNA (23S mt-rRNA) and 42 different proteins.

It localises to the mitochondrion. Component of the mitochondrial ribosome (mitoribosome), a dedicated translation machinery responsible for the synthesis of mitochondrial genome-encoded proteins, including at least some of the essential transmembrane subunits of the mitochondrial respiratory chain. The mitoribosomes are attached to the mitochondrial inner membrane and translation products are cotranslationally integrated into the membrane. This is Large ribosomal subunit protein mL58 (mrpl20) from Neurospora crassa (strain ATCC 24698 / 74-OR23-1A / CBS 708.71 / DSM 1257 / FGSC 987).